Here is a 256-residue protein sequence, read N- to C-terminus: Small ribosomal subunit protein eS1 (256 aa).

Over residues 1–18 (MAVGKNKRLSKGKKGIKK) the composition is skewed to basic residues. The tract at residues 1–20 (MAVGKNKRLSKGKKGIKKRT) is disordered. The residue at position 2 (Ala2) is an N-acetylalanine; partial.

The protein belongs to the eukaryotic ribosomal protein eS1 family. Component of the small ribosomal subunit. Mature ribosomes consist of a small (40S) and a large (60S) subunit. The 40S subunit contains about 33 different proteins and 1 molecule of RNA (18S). The 60S subunit contains about 49 different proteins and 3 molecules of RNA (25S, 5.8S and 5S).

The protein resides in the cytoplasm. In Aspergillus flavus (strain ATCC 200026 / FGSC A1120 / IAM 13836 / NRRL 3357 / JCM 12722 / SRRC 167), this protein is Small ribosomal subunit protein eS1 (rps1).